The primary structure comprises 339 residues: Biotin synthase (339 aa).

Residues 55–282 enclose the Radical SAM core domain; the sequence is NAVQLSTLLS…KAVVRLSAGR (228 aa). 3 residues coordinate [4Fe-4S] cluster: Cys70, Cys74, and Cys77. Positions 114, 145, 205, and 277 each coordinate [2Fe-2S] cluster.

Belongs to the radical SAM superfamily. Biotin synthase family. Homodimer. [4Fe-4S] cluster is required as a cofactor. It depends on [2Fe-2S] cluster as a cofactor.

The enzyme catalyses (4R,5S)-dethiobiotin + (sulfur carrier)-SH + 2 reduced [2Fe-2S]-[ferredoxin] + 2 S-adenosyl-L-methionine = (sulfur carrier)-H + biotin + 2 5'-deoxyadenosine + 2 L-methionine + 2 oxidized [2Fe-2S]-[ferredoxin]. Its pathway is cofactor biosynthesis; biotin biosynthesis; biotin from 7,8-diaminononanoate: step 2/2. Functionally, catalyzes the conversion of dethiobiotin (DTB) to biotin by the insertion of a sulfur atom into dethiobiotin via a radical-based mechanism. This is Biotin synthase from Burkholderia orbicola (strain MC0-3).